A 161-amino-acid polypeptide reads, in one-letter code: Phosphopantetheine adenylyltransferase (161 aa).

Serine 9 contributes to the substrate binding site. ATP-binding positions include 9–10 and histidine 17; that span reads SF. Residues lysine 41, leucine 73, and arginine 87 each coordinate substrate. Residues 88–90, glutamate 98, and 123–129 contribute to the ATP site; these read GLR and YTFISSS.

The protein belongs to the bacterial CoaD family. In terms of assembly, homohexamer. The cofactor is Mg(2+).

It localises to the cytoplasm. The catalysed reaction is (R)-4'-phosphopantetheine + ATP + H(+) = 3'-dephospho-CoA + diphosphate. It participates in cofactor biosynthesis; coenzyme A biosynthesis; CoA from (R)-pantothenate: step 4/5. In terms of biological role, reversibly transfers an adenylyl group from ATP to 4'-phosphopantetheine, yielding dephospho-CoA (dPCoA) and pyrophosphate. This chain is Phosphopantetheine adenylyltransferase, found in Syntrophomonas wolfei subsp. wolfei (strain DSM 2245B / Goettingen).